Consider the following 244-residue polypeptide: Phosphoadenosine 5'-phosphosulfate reductase (244 aa).

Cysteine 239 functions as the Nucleophile; cysteine thiosulfonate intermediate in the catalytic mechanism.

This sequence belongs to the PAPS reductase family. CysH subfamily.

The protein localises to the cytoplasm. The catalysed reaction is [thioredoxin]-disulfide + sulfite + adenosine 3',5'-bisphosphate + 2 H(+) = [thioredoxin]-dithiol + 3'-phosphoadenylyl sulfate. The protein operates within sulfur metabolism; hydrogen sulfide biosynthesis; sulfite from sulfate: step 3/3. In terms of biological role, catalyzes the formation of sulfite from phosphoadenosine 5'-phosphosulfate (PAPS) using thioredoxin as an electron donor. The chain is Phosphoadenosine 5'-phosphosulfate reductase from Yersinia enterocolitica serotype O:8 / biotype 1B (strain NCTC 13174 / 8081).